A 106-amino-acid chain; its full sequence is uncharacterized protein (106 aa).

The next 2 helical transmembrane spans lie at 17–37 (AGLL…AVLV) and 55–75 (FSSS…FMIF).

The protein localises to the membrane. This is an uncharacterized protein from Saccharomyces cerevisiae (strain ATCC 204508 / S288c) (Baker's yeast).